The following is a 214-amino-acid chain: Chaperone protein TorD (214 aa).

This sequence belongs to the TorD/DmsD family. TorD subfamily.

The protein resides in the cytoplasm. In terms of biological role, involved in the biogenesis of TorA. Acts on TorA before the insertion of the molybdenum cofactor and, as a result, probably favors a conformation of the apoenzyme that is competent for acquiring the cofactor. The sequence is that of Chaperone protein TorD from Aeromonas salmonicida (strain A449).